A 397-amino-acid chain; its full sequence is uncharacterized protein (397 aa).

Disordered regions lie at residues 159–203 (LNSS…KSTI) and 221–397 (NSVK…KTKN). Positions 221-240 (NSVKSSPSKSFVSISSPVQS) are enriched in low complexity. Polar residues-rich tracts occupy residues 285 to 309 (TSTLDASSSNTSLASTGPMTVSSST) and 320 to 330 (VNPNSTSSVTF). Positions 342–371 (CSRCKKSKKGCDRQRPCGRCRDAGLNSEDC) form a DNA-binding region, zn(2)-C6 fungal-type. Positions 350–363 (KGCDRQRPCGRCRD) are enriched in basic and acidic residues. Over residues 383 to 397 (RKPRGRGRGRPKTKN) the composition is skewed to basic residues.

It localises to the nucleus. This is an uncharacterized protein from Schizosaccharomyces pombe (strain 972 / ATCC 24843) (Fission yeast).